The sequence spans 186 residues: Calcium load-activated calcium channel homolog (186 aa).

The Cytoplasmic segment spans residues 1–6; the sequence is MLGDCL. The helical transmembrane segment at 7 to 27 threads the bilayer; it reads LIIAIAFGTALAGEGITWLLV. At 28–87 the chain is on the lumenal side; it reads YRSDHYKRLKADMDKKTKKLEKKKQEVGDTNDKNIKRKLEREEERLKATNRDMSMFKMKS. The stretch at 30 to 86 forms a coiled coil; it reads SDHYKRLKADMDKKTKKLEKKKQEVGDTNDKNIKRKLEREEERLKATNRDMSMFKMK. Residues 88 to 108 traverse the membrane as a helical segment; the sequence is MFAIGLAFTALLSTFNSIFEG. The Cytoplasmic portion of the chain corresponds to 109–134; the sequence is RVVAKLPFYPIGFIQGLSHRNLIGED. The pore-forming intramembrane region spans 135–151; the sequence is MTDCSFIFLYILCTMTV. Topologically, residues 152-186 are cytoplasmic; sequence RQNLQKILGFAPSRAMARQQSSPWAPPNSQMNYLR.

Belongs to the TMCO1 family. In terms of assembly, homodimer and homotetramer.

The protein resides in the endoplasmic reticulum membrane. Calcium-selective channel required to prevent calcium stores from overfilling. The chain is Calcium load-activated calcium channel homolog from Caenorhabditis elegans.